The chain runs to 208 residues: A-type ATP synthase subunit E (208 aa).

The tract at residues 37-57 (DAEKTAEAEKNKILDNGKKQS) is disordered.

Belongs to the V-ATPase E subunit family. In terms of assembly, has multiple subunits with at least A(3), B(3), C, D, E, F, H, I and proteolipid K(x).

The protein localises to the cell membrane. Functionally, component of the A-type ATP synthase that produces ATP from ADP in the presence of a proton gradient across the membrane. This chain is A-type ATP synthase subunit E, found in Methanobrevibacter smithii (strain ATCC 35061 / DSM 861 / OCM 144 / PS).